Reading from the N-terminus, the 876-residue chain is MAP7 domain-containing protein 3 (876 aa).

An N-acetylmethionine modification is found at M1. Positions 65-144 (NDIKQRLARE…DEAQKEKFTA (80 aa)) form a coiled coil. Disordered regions lie at residues 72-137 (ARER…KDEA) and 170-246 (AMAN…KPRV). Positions 171–183 (MANSESKTANKRS) are enriched in polar residues. S185 bears the Phosphoserine mark. Residues 191–211 (QGTSALIRQMPLSSAGLQNSV) are compositionally biased toward polar residues. Residues 214–244 (RKTDKERSSSLNRRDSNLHSSTDKEQAERKP) are compositionally biased toward basic and acidic residues. S322 carries the phosphoserine modification. Residues 407 to 475 (EAAPEGSLEA…ARDAPKKSEM (69 aa)) are disordered. Residues 425–438 (APKESVKGSPKESM) show a composition bias toward basic and acidic residues. Phosphoserine occurs at positions 441, 457, and 461. Positions 465-475 (KARDAPKKSEM) are enriched in basic and acidic residues. S490 carries the phosphoserine modification. Disordered stretches follow at residues 509–533 (SPIS…SKQS), 613–697 (QREK…KKEH), and 723–754 (RKTD…SDKD). The segment covering 510-521 (PISTNRQIQKNC) has biased composition (polar residues). S524 bears the Phosphoserine mark. Coiled coils occupy residues 558–640 (VKKK…MAKE) and 689–724 (EADK…RTRK). Composition is skewed to basic and acidic residues over residues 613–639 (QREK…DMAK) and 680–697 (GDAK…KKEH). Positions 742-752 (EEAEADNEESD) are enriched in acidic residues. Residues S770 and S817 each carry the phosphoserine modification. Positions 802–876 (PKTYFNGDLK…LPKSSDTFRQ (75 aa)) are disordered. Positions 820–830 (DTSIQEVVSRP) are enriched in polar residues. The segment covering 831–842 (SSKRMTSHTTKT) has biased composition (basic residues). Residue S832 is modified to Phosphoserine. Over residues 848 to 860 (TNTTSRSSAQTKS) the composition is skewed to polar residues. The span at 861 to 876 (EGFHDILPKSSDTFRQ) shows a compositional bias: basic and acidic residues.

The protein belongs to the MAP7 family. Interacts (via N-terminus coiled coil domains) with tubulin and microtubules.

The protein resides in the cytoplasm. It localises to the cytoskeleton. Its subcellular location is the spindle. Its function is as follows. Promotes the assembly and stability of microtubules. The chain is MAP7 domain-containing protein 3 (MAP7D3) from Homo sapiens (Human).